The chain runs to 135 residues: Sex-regulated protein janus-A (135 aa).

K37 contacts substrate. The active-site Proton acceptor is H63. Substrate is bound at residue 104-106 (SQG).

The protein belongs to the janus family.

JanA and janB regulate somatic sex differentiation. The protein is Sex-regulated protein janus-A (janA) of Drosophila orena (Fruit fly).